The chain runs to 320 residues: Taste receptor type 2 member 129 (320 aa).

At 1 to 8 the chain is on the extracellular side; it reads MDGIVQNM. Residues 9–29 traverse the membrane as a helical segment; sequence FTFIVIVEIIIGWIGNGFIAL. Topologically, residues 30–55 are cytoplasmic; that stretch reads VNCIHWYKRRKISALNQILTALAFSR. The chain crosses the membrane as a helical span at residues 56–76; that stretch reads IYLLLTVFTVIAVSTLYTHVL. Residues 77–88 are Extracellular-facing; that stretch reads VTRRVVKLINFH. The chain crosses the membrane as a helical span at residues 89-109; the sequence is LLFSNHFSMWLAACLGLYYFL. Residues 110 to 128 are Cytoplasmic-facing; sequence KIAHFPNSIFVYLKMRINQ. A helical transmembrane segment spans residues 129–149; sequence VVSGTLLMSLGLLFLNTLLIN. At 150-185 the chain is on the extracellular side; that stretch reads SYIDTKIDDYREHLLYDFTSNNTASFYRVILVINNC. Asparagine 170 carries N-linked (GlcNAc...) asparagine glycosylation. The chain crosses the membrane as a helical span at residues 186–206; the sequence is IFTSIPFTLSQSTFLLLIFSL. At 207-233 the chain is on the cytoplasmic side; sequence WRHYKKMQQHAQRCRDVLADAHIRVLQ. The chain crosses the membrane as a helical span at residues 234 to 254; sequence TMVTYVLLCAIFFLSLSMQIL. Residues 255–264 are Extracellular-facing; the sequence is RSELLKNILY. Residues 265–285 traverse the membrane as a helical segment; that stretch reads VRFCEIVAAVFPSGHSCVLIC. The Cytoplasmic portion of the chain corresponds to 286 to 320; it reads RDTNLRGTFLSVLSWLKQRFTSWIPNINCRSSCIF.

This sequence belongs to the G-protein coupled receptor T2R family.

It localises to the membrane. In terms of biological role, putative taste receptor which may play a role in the perception of bitterness. This Mus musculus (Mouse) protein is Taste receptor type 2 member 129.